Here is a 322-residue protein sequence, read N- to C-terminus: NADH-quinone oxidoreductase subunit H (322 aa).

8 consecutive transmembrane segments (helical) span residues 15–35 (ILHITLIIIFIIFFAATLSIL), 82–102 (IFILSPIIAFVSLLLVIPTIP), 114–134 (IGILFFLMMASLSVYAVLFAG), 149–169 (ASAQTLSYEVFLGLSLMGVIA), 186–206 (VWNVIPQFFGFLCFFIAGIAL), 243–263 (ISIITVSALISTVFFGGYFGF), 265–285 (GSSFFWLFLKTVFFILIFILI), and 302–322 (WKICLPLTLLNLIITAFFILI).

This sequence belongs to the complex I subunit 1 family. As to quaternary structure, NDH-1 is composed of 13 different subunits. Subunits NuoA, H, J, K, L, M, N constitute the membrane sector of the complex.

It is found in the cell membrane. The enzyme catalyses a quinone + NADH + 5 H(+)(in) = a quinol + NAD(+) + 4 H(+)(out). NDH-1 shuttles electrons from NADH, via FMN and iron-sulfur (Fe-S) centers, to quinones in the respiratory chain. The immediate electron acceptor for the enzyme in this species is believed to be ubiquinone. Couples the redox reaction to proton translocation (for every two electrons transferred, four hydrogen ions are translocated across the cytoplasmic membrane), and thus conserves the redox energy in a proton gradient. This subunit may bind ubiquinone. The sequence is that of NADH-quinone oxidoreductase subunit H from Buchnera aphidicola subsp. Schizaphis graminum (strain Sg).